We begin with the raw amino-acid sequence, 214 residues long: Thymidylate kinase (214 aa).

10–17 (GPDGAGKT) is a binding site for ATP.

The protein belongs to the thymidylate kinase family.

It carries out the reaction dTMP + ATP = dTDP + ADP. Phosphorylation of dTMP to form dTDP in both de novo and salvage pathways of dTTP synthesis. The chain is Thymidylate kinase from Latilactobacillus sakei subsp. sakei (strain 23K) (Lactobacillus sakei subsp. sakei).